A 505-amino-acid chain; its full sequence is Maturase K (505 aa).

This sequence belongs to the intron maturase 2 family. MatK subfamily.

The protein localises to the plastid. It is found in the chloroplast. Functionally, usually encoded in the trnK tRNA gene intron. Probably assists in splicing its own and other chloroplast group II introns. In Illicium oligandrum (Star anise), this protein is Maturase K.